A 399-amino-acid chain; its full sequence is tRNA-dihydrouridine(16/17) synthase [NAD(P)(+)] (399 aa).

FMN-binding positions include 24-26 (PMV) and Gln-80. Cys-109 acts as the Proton donor in catalysis. FMN is bound by residues Lys-148, His-176, 211–213 (NGN), and 235–236 (AE).

It belongs to the Dus family. Dus1 subfamily. It depends on FMN as a cofactor.

Its subcellular location is the nucleus. It localises to the mitochondrion. It carries out the reaction 5,6-dihydrouridine(16) in tRNA + NADP(+) = uridine(16) in tRNA + NADPH + H(+). It catalyses the reaction 5,6-dihydrouridine(16) in tRNA + NAD(+) = uridine(16) in tRNA + NADH + H(+). The catalysed reaction is 5,6-dihydrouridine(17) in tRNA + NAD(+) = uridine(17) in tRNA + NADH + H(+). The enzyme catalyses 5,6-dihydrouridine(17) in tRNA + NADP(+) = uridine(17) in tRNA + NADPH + H(+). It carries out the reaction a 5,6-dihydrouridine in mRNA + NAD(+) = a uridine in mRNA + NADH + H(+). It catalyses the reaction a 5,6-dihydrouridine in mRNA + NADP(+) = a uridine in mRNA + NADPH + H(+). Functionally, catalyzes the synthesis of dihydrouridine, a modified base found in the D-loop of most tRNAs. Also able to mediate dihydrouridylation of some mRNAs, thereby affecting their translation. The polypeptide is tRNA-dihydrouridine(16/17) synthase [NAD(P)(+)] (Schizosaccharomyces pombe (strain 972 / ATCC 24843) (Fission yeast)).